Here is a 130-residue protein sequence, read N- to C-terminus: Small ribosomal subunit protein uS9 (130 aa).

The tract at residues 99 to 130 (KRAGLLTRDPRMKERKKPGLKAARRSPQFSKR) is disordered. The segment covering 111–130 (KERKKPGLKAARRSPQFSKR) has biased composition (basic residues).

The protein belongs to the universal ribosomal protein uS9 family.

The polypeptide is Small ribosomal subunit protein uS9 (Staphylococcus aureus (strain Mu3 / ATCC 700698)).